Reading from the N-terminus, the 153-residue chain is Deoxyuridine 5'-triphosphate nucleotidohydrolase (153 aa).

Substrate contacts are provided by residues 71–73 (RSG), Asn-84, 88–90 (TID), and Lys-98.

This sequence belongs to the dUTPase family. Mg(2+) is required as a cofactor.

It catalyses the reaction dUTP + H2O = dUMP + diphosphate + H(+). It participates in pyrimidine metabolism; dUMP biosynthesis; dUMP from dCTP (dUTP route): step 2/2. Its function is as follows. This enzyme is involved in nucleotide metabolism: it produces dUMP, the immediate precursor of thymidine nucleotides and it decreases the intracellular concentration of dUTP so that uracil cannot be incorporated into DNA. The protein is Deoxyuridine 5'-triphosphate nucleotidohydrolase of Wolbachia pipientis wMel.